Here is a 54-residue protein sequence, read N- to C-terminus: UPF0391 membrane protein PFL_0093 (54 aa).

Helical transmembrane passes span 4 to 24 (WAIT…GGIA) and 29 to 49 (GIAK…FFFG).

The protein belongs to the UPF0391 family.

It localises to the cell membrane. The sequence is that of UPF0391 membrane protein PFL_0093 from Pseudomonas fluorescens (strain ATCC BAA-477 / NRRL B-23932 / Pf-5).